Here is a 362-residue protein sequence, read N- to C-terminus: Caspase activity and apoptosis inhibitor 1 (362 aa).

The span at 1–14 (MTGKKSSREKRRKR) shows a compositional bias: basic residues. 2 disordered regions span residues 1-44 (MTGK…SGCG) and 65-101 (TGGG…GSLQ). Low complexity predominate over residues 19–32 (AAAALAAPDLVPAV). Gly residues-rich tracts occupy residues 33-44 (GGSGSGSTSGCG) and 65-74 (TGGGSGGSCW). Position 89 is a phosphoserine (S89). T90 is modified (phosphothreonine). A Glycyl lysine isopeptide (Lys-Gly) (interchain with G-Cter in SUMO2) cross-link involves residue K105. Residues S121 and S204 each carry the phosphoserine modification. Disordered stretches follow at residues 226-251 (SCVD…GKGE), 269-291 (GPCN…EAGQ), and 309-332 (LAES…DVQP). Residues 235-251 (RENKQPEGLELKQGKGE) show a composition bias toward basic and acidic residues. Low complexity predominate over residues 273–282 (EEAAAPEVPE). Residues 282-312 (ENTVQSEAGQIDDLEKDIEKSVNEILGLAES) are a coiled coil. S313 carries the phosphoserine modification.

Anti-apoptotic protein that modulates a caspase-10 dependent mitochondrial caspase-3/9 feedback amplification loop. The chain is Caspase activity and apoptosis inhibitor 1 (CAAP1) from Bos taurus (Bovine).